Reading from the N-terminus, the 230-residue chain is MAQGLIEVERKFLPGPGTEERLQELGGTLEYRVTFRDTYYDTPELSLMQADHWLRRREDSGWELKCPGAAGVLGPHTEYKELTAEPTIVAQLCKVLRADGLGAGDVAAVLGPLGLQEVASFVTKRSAWKLVLLGADEEEPQLRVDLDTADFGYAVGEVEALVHEEAEVPTALEKIHRLSSMLGVPAQETAPAKLIVYLQRFRPQDYQRLLEVNSSRERPQETEDPDHCLG.

At Ala-2 the chain carries N-acetylalanine. One can recognise a CYTH domain in the interval 5–201 (LIEVERKFLP…AKLIVYLQRF (197 aa)). Positions 7 and 9 each coordinate Mg(2+). The substrate site is built by Lys-11, Arg-55, Arg-57, Lys-65, and Arg-125. Residues Asp-145, Glu-157, and Glu-159 each contribute to the Mg(2+) site. Position 157 (Glu-157) interacts with substrate. Lys-193 contributes to the substrate binding site.

Belongs to the ThTPase family. Monomer. Mg(2+) is required as a cofactor. Widely expressed but at a low level.

The protein resides in the cytoplasm. The catalysed reaction is thiamine triphosphate + H2O = thiamine diphosphate + phosphate + H(+). In terms of biological role, hydrolase highly specific for thiamine triphosphate (ThTP). In Homo sapiens (Human), this protein is Thiamine-triphosphatase (THTPA).